The primary structure comprises 619 residues: Dihydroxy-acid dehydratase 1 (619 aa).

Asp-81 contributes to the Mg(2+) binding site. Cys-122 lines the [2Fe-2S] cluster pocket. Residues Asp-123 and Lys-124 each coordinate Mg(2+). N6-carboxylysine is present on Lys-124. Residue Cys-198 coordinates [2Fe-2S] cluster. Glu-494 contacts Mg(2+). The active-site Proton acceptor is the Ser-520.

The protein belongs to the IlvD/Edd family. Homodimer. [2Fe-2S] cluster is required as a cofactor. It depends on Mg(2+) as a cofactor.

It carries out the reaction (2R)-2,3-dihydroxy-3-methylbutanoate = 3-methyl-2-oxobutanoate + H2O. The enzyme catalyses (2R,3R)-2,3-dihydroxy-3-methylpentanoate = (S)-3-methyl-2-oxopentanoate + H2O. Its pathway is amino-acid biosynthesis; L-isoleucine biosynthesis; L-isoleucine from 2-oxobutanoate: step 3/4. The protein operates within amino-acid biosynthesis; L-valine biosynthesis; L-valine from pyruvate: step 3/4. Its function is as follows. Functions in the biosynthesis of branched-chain amino acids. Catalyzes the dehydration of (2R,3R)-2,3-dihydroxy-3-methylpentanoate (2,3-dihydroxy-3-methylvalerate) into 2-oxo-3-methylpentanoate (2-oxo-3-methylvalerate) and of (2R)-2,3-dihydroxy-3-methylbutanoate (2,3-dihydroxyisovalerate) into 2-oxo-3-methylbutanoate (2-oxoisovalerate), the penultimate precursor to L-isoleucine and L-valine, respectively. This is Dihydroxy-acid dehydratase 1 from Bordetella pertussis (strain Tohama I / ATCC BAA-589 / NCTC 13251).